The sequence spans 626 residues: Putative folylpolyglutamate synthase (626 aa).

Residue 144–147 coordinates ATP; that stretch reads GKGS. 3 residues coordinate Mg(2+): Ser168, Glu235, and His263. ATP-binding residues include Arg412 and Asp430.

It belongs to the folylpolyglutamate synthase family.

It catalyses the reaction (6S)-5,6,7,8-tetrahydrofolyl-(gamma-L-Glu)(n) + L-glutamate + ATP = (6S)-5,6,7,8-tetrahydrofolyl-(gamma-L-Glu)(n+1) + ADP + phosphate + H(+). Its pathway is cofactor biosynthesis; tetrahydrofolylpolyglutamate biosynthesis. In terms of biological role, conversion of folates to polyglutamate derivatives. The protein is Putative folylpolyglutamate synthase (folC) of Dictyostelium discoideum (Social amoeba).